A 75-amino-acid chain; its full sequence is Exodeoxyribonuclease 7 small subunit (75 aa).

It belongs to the XseB family. Heterooligomer composed of large and small subunits.

The protein localises to the cytoplasm. The catalysed reaction is Exonucleolytic cleavage in either 5'- to 3'- or 3'- to 5'-direction to yield nucleoside 5'-phosphates.. Functionally, bidirectionally degrades single-stranded DNA into large acid-insoluble oligonucleotides, which are then degraded further into small acid-soluble oligonucleotides. This Pelobacter propionicus (strain DSM 2379 / NBRC 103807 / OttBd1) protein is Exodeoxyribonuclease 7 small subunit.